We begin with the raw amino-acid sequence, 201 residues long: 3-isopropylmalate dehydratase small subunit (201 aa).

It belongs to the LeuD family. LeuD type 1 subfamily. In terms of assembly, heterodimer of LeuC and LeuD.

It carries out the reaction (2R,3S)-3-isopropylmalate = (2S)-2-isopropylmalate. Its pathway is amino-acid biosynthesis; L-leucine biosynthesis; L-leucine from 3-methyl-2-oxobutanoate: step 2/4. Its function is as follows. Catalyzes the isomerization between 2-isopropylmalate and 3-isopropylmalate, via the formation of 2-isopropylmaleate. This is 3-isopropylmalate dehydratase small subunit from Shewanella baltica (strain OS155 / ATCC BAA-1091).